We begin with the raw amino-acid sequence, 474 residues long: Bifunctional protein HldE (474 aa).

The ribokinase stretch occupies residues 1–318 (MKLSMPRFDQ…RAIQREEGSE (318 aa)). 194 to 197 (NLSE) lines the ATP pocket. Asp263 is a catalytic residue. The tract at residues 343 to 474 (FTNGCFDILH…AIVEKIRGQG (132 aa)) is cytidylyltransferase.

The protein in the N-terminal section; belongs to the carbohydrate kinase PfkB family. In the C-terminal section; belongs to the cytidylyltransferase family. Homodimer.

The enzyme catalyses D-glycero-beta-D-manno-heptose 7-phosphate + ATP = D-glycero-beta-D-manno-heptose 1,7-bisphosphate + ADP + H(+). It catalyses the reaction D-glycero-beta-D-manno-heptose 1-phosphate + ATP + H(+) = ADP-D-glycero-beta-D-manno-heptose + diphosphate. It participates in nucleotide-sugar biosynthesis; ADP-L-glycero-beta-D-manno-heptose biosynthesis; ADP-L-glycero-beta-D-manno-heptose from D-glycero-beta-D-manno-heptose 7-phosphate: step 1/4. The protein operates within nucleotide-sugar biosynthesis; ADP-L-glycero-beta-D-manno-heptose biosynthesis; ADP-L-glycero-beta-D-manno-heptose from D-glycero-beta-D-manno-heptose 7-phosphate: step 3/4. Its function is as follows. Catalyzes the phosphorylation of D-glycero-D-manno-heptose 7-phosphate at the C-1 position to selectively form D-glycero-beta-D-manno-heptose-1,7-bisphosphate. In terms of biological role, catalyzes the ADP transfer from ATP to D-glycero-beta-D-manno-heptose 1-phosphate, yielding ADP-D-glycero-beta-D-manno-heptose. This Pseudomonas syringae pv. tomato (strain ATCC BAA-871 / DC3000) protein is Bifunctional protein HldE.